A 149-amino-acid polypeptide reads, in one-letter code: Transcriptional regulator MraZ (149 aa).

SpoVT-AbrB domains are found at residues 6 to 52 (RSYR…TPED) and 81 to 124 (VEEL…SEEE).

This sequence belongs to the MraZ family. In terms of assembly, forms oligomers.

It localises to the cytoplasm. The protein localises to the nucleoid. This Oleidesulfovibrio alaskensis (strain ATCC BAA-1058 / DSM 17464 / G20) (Desulfovibrio alaskensis) protein is Transcriptional regulator MraZ.